Here is a 113-residue protein sequence, read N- to C-terminus: uncharacterized protein (113 aa).

This sequence belongs to the HesB/IscA family.

This is an uncharacterized protein from Synechocystis sp. (strain ATCC 27184 / PCC 6803 / Kazusa).